The sequence spans 417 residues: NADH-quinone oxidoreductase subunit D (417 aa).

This sequence belongs to the complex I 49 kDa subunit family. NDH-1 is composed of 14 different subunits. Subunits NuoB, C, D, E, F, and G constitute the peripheral sector of the complex.

The protein resides in the cell inner membrane. The catalysed reaction is a quinone + NADH + 5 H(+)(in) = a quinol + NAD(+) + 4 H(+)(out). Functionally, NDH-1 shuttles electrons from NADH, via FMN and iron-sulfur (Fe-S) centers, to quinones in the respiratory chain. The immediate electron acceptor for the enzyme in this species is believed to be ubiquinone. Couples the redox reaction to proton translocation (for every two electrons transferred, four hydrogen ions are translocated across the cytoplasmic membrane), and thus conserves the redox energy in a proton gradient. This chain is NADH-quinone oxidoreductase subunit D, found in Polaromonas naphthalenivorans (strain CJ2).